Here is a 739-residue protein sequence, read N- to C-terminus: Phosphoribosylformylglycinamidine synthase subunit PurL (739 aa).

H52 is an active-site residue. Positions 55 and 94 each coordinate ATP. A Mg(2+)-binding site is contributed by E96. Residues 97-100 (SHNH) and R119 each bind substrate. The active-site Proton acceptor is the H98. D120 provides a ligand contact to Mg(2+). Q243 is a binding site for substrate. Residue D271 coordinates Mg(2+). 315 to 317 (ESQ) is a substrate binding site. Positions 498 and 535 each coordinate ATP. N536 lines the Mg(2+) pocket. S538 serves as a coordination point for substrate.

This sequence belongs to the FGAMS family. In terms of assembly, monomer. Part of the FGAM synthase complex composed of 1 PurL, 1 PurQ and 2 PurS subunits.

Its subcellular location is the cytoplasm. It catalyses the reaction N(2)-formyl-N(1)-(5-phospho-beta-D-ribosyl)glycinamide + L-glutamine + ATP + H2O = 2-formamido-N(1)-(5-O-phospho-beta-D-ribosyl)acetamidine + L-glutamate + ADP + phosphate + H(+). It functions in the pathway purine metabolism; IMP biosynthesis via de novo pathway; 5-amino-1-(5-phospho-D-ribosyl)imidazole from N(2)-formyl-N(1)-(5-phospho-D-ribosyl)glycinamide: step 1/2. In terms of biological role, part of the phosphoribosylformylglycinamidine synthase complex involved in the purines biosynthetic pathway. Catalyzes the ATP-dependent conversion of formylglycinamide ribonucleotide (FGAR) and glutamine to yield formylglycinamidine ribonucleotide (FGAM) and glutamate. The FGAM synthase complex is composed of three subunits. PurQ produces an ammonia molecule by converting glutamine to glutamate. PurL transfers the ammonia molecule to FGAR to form FGAM in an ATP-dependent manner. PurS interacts with PurQ and PurL and is thought to assist in the transfer of the ammonia molecule from PurQ to PurL. The polypeptide is Phosphoribosylformylglycinamidine synthase subunit PurL (Caulobacter vibrioides (strain ATCC 19089 / CIP 103742 / CB 15) (Caulobacter crescentus)).